The primary structure comprises 516 residues: Maturase K (516 aa).

Belongs to the intron maturase 2 family. MatK subfamily.

Its subcellular location is the plastid. The protein resides in the chloroplast. Functionally, usually encoded in the trnK tRNA gene intron. Probably assists in splicing its own and other chloroplast group II introns. The sequence is that of Maturase K from Cypripedium calceolus (Yellow lady's slipper).